The chain runs to 520 residues: MEASLAIYYGIILITVTLGLVYTWRVLNWIWLKPKRLEKLLREQGCNGNSYRLVLGDLKDSYKMGKKAKSKPMELSDDIIPRVIPYIQQLVQIYGKNPFIWSGTTPRLILTEPELIKDVLNRTSELQKPKYEIFKFLFSGLIIHEGEKWRKHRRLMNAAFQLEKLKIMAPSFLTSCIDMISKWESTLSSDGSGEIDIWPSLQNLTSDVISRNAFGSSYEEGKRIFDLQREQGELVMKNLVKSLIPLWRFIPTATQRRMHEIEKDIDSSLRYIINKREKAMKAGEATENDLLGLLLESNHQEIRDHGNNKNMGMSLEDVVGECKLFYLAGQESTSTMLVWTMILLSRYPDWQERAREEVLQIFGNKKPDYEGLNKLKILPMILYEVLRLYPPAFGVTRYVGKDIKFGNMEVPAGVEVFLPIILLQHNNELWGDDAKMFNPERFAEGISKATNGRFIYFPFGGGPRVCMGQNFSLLEAKMAVSMILQNFYFELSPTYAHTPNLVMTIQPEKGAHVILRKVKA.

Residues 4–24 (SLAIYYGIILITVTLGLVYTW) form a helical membrane-spanning segment. Cys466 is a binding site for heme.

This sequence belongs to the cytochrome P450 family. The cofactor is heme.

It is found in the membrane. Catalyzes hydroxylation at the C-2 position of different intermediates of the hemolytic sapogenin biosynthetic pathway downstream of oleanolic acid synthesis. The protein is Cytochrome P450 716A67 of Medicago truncatula (Barrel medic).